The following is a 1050-amino-acid chain: NAD-specific glutamate dehydrogenase (1050 aa).

The tract at residues methionine 1 to glycine 39 is disordered. Over residues lysine 12–proline 22 the composition is skewed to basic and acidic residues. The active site involves lysine 594.

The protein belongs to the Glu/Leu/Phe/Val dehydrogenases family. Homotetramer.

The enzyme catalyses L-glutamate + NAD(+) + H2O = 2-oxoglutarate + NH4(+) + NADH + H(+). This chain is NAD-specific glutamate dehydrogenase (gdh-1), found in Neurospora crassa (strain ATCC 24698 / 74-OR23-1A / CBS 708.71 / DSM 1257 / FGSC 987).